Here is a 229-residue protein sequence, read N- to C-terminus: Enolase-phosphatase E1 (229 aa).

A compositionally biased stretch (polar residues) spans 208–218 (DTQSTHRQVSS). The segment at 208–229 (DTQSTHRQVSSFDDIHPEQIPT) is disordered. The span at 220–229 (DDIHPEQIPT) shows a compositional bias: basic and acidic residues.

It belongs to the HAD-like hydrolase superfamily. MasA/MtnC family. Monomer. It depends on Mg(2+) as a cofactor.

The enzyme catalyses 5-methylsulfanyl-2,3-dioxopentyl phosphate + H2O = 1,2-dihydroxy-5-(methylsulfanyl)pent-1-en-3-one + phosphate. The protein operates within amino-acid biosynthesis; L-methionine biosynthesis via salvage pathway; L-methionine from S-methyl-5-thio-alpha-D-ribose 1-phosphate: step 3/6. It participates in amino-acid biosynthesis; L-methionine biosynthesis via salvage pathway; L-methionine from S-methyl-5-thio-alpha-D-ribose 1-phosphate: step 4/6. Bifunctional enzyme that catalyzes the enolization of 2,3-diketo-5-methylthiopentyl-1-phosphate (DK-MTP-1-P) into the intermediate 2-hydroxy-3-keto-5-methylthiopentenyl-1-phosphate (HK-MTPenyl-1-P), which is then dephosphorylated to form the acireductone 1,2-dihydroxy-3-keto-5-methylthiopentene (DHK-MTPene). The chain is Enolase-phosphatase E1 from Cronobacter sakazakii (strain ATCC BAA-894) (Enterobacter sakazakii).